Consider the following 181-residue polypeptide: MIKLFTLKQQKKDGEQKGSQQKKASAAQLRIQKDINELNLPNTCATDFPDPNDLLNFKLIISPDEGFYRDGRFVFNFRVGSNYPHEPPKVKCATQVYHPNIDLDGNVCLNILREDWNPVLNINSIVYGLQFLFLEPNPEDPLNKEAADVLQTNRRQFENNVKKAMRGGCVGETYFECCLLK.

2 interaction with Uba3 regions span residues 4–7 and 24–54; these read LFTL and ASAAQLRIQKDINELNLPNTCATDFPDPNDL. The region spanning 26-170 is the UBC core domain; the sequence is AAQLRIQKDI…VKKAMRGGCV (145 aa). The Glycyl thioester intermediate role is filled by Cys-108.

The protein belongs to the ubiquitin-conjugating enzyme family. UBC12 subfamily. As to quaternary structure, interacts with Uba3. Expressed in the wing disk.

The catalysed reaction is [E1 NEDD8-activating enzyme]-S-[NEDD8 protein]-yl-L-cysteine + [E2 NEDD8-conjugating enzyme]-L-cysteine = [E1 NEDD8-activating enzyme]-L-cysteine + [E2 NEDD8-conjugating enzyme]-S-[NEDD8-protein]-yl-L-cysteine.. The protein operates within protein modification; protein neddylation. Its function is as follows. Accepts the ubiquitin-like protein Nedd8 from the Uba3-APP-BP1 E1 complex and catalyzes its covalent attachment to other proteins. Required for Cul1 and Cul3 neddylation. Negatively regulates full-length ci stability and hedgehog signaling. The polypeptide is Nedd8-conjugating enzyme UbcE2M (Drosophila melanogaster (Fruit fly)).